The primary structure comprises 198 residues: Orotate phosphoribosyltransferase (198 aa).

5-phospho-alpha-D-ribose 1-diphosphate contacts are provided by residues R108, K109, K112, H114, and 135 to 143 (EDVVTTGKS). Residues T139 and R167 each coordinate orotate.

This sequence belongs to the purine/pyrimidine phosphoribosyltransferase family. PyrE subfamily. As to quaternary structure, homodimer. Mg(2+) serves as cofactor.

It carries out the reaction orotidine 5'-phosphate + diphosphate = orotate + 5-phospho-alpha-D-ribose 1-diphosphate. It functions in the pathway pyrimidine metabolism; UMP biosynthesis via de novo pathway; UMP from orotate: step 1/2. Catalyzes the transfer of a ribosyl phosphate group from 5-phosphoribose 1-diphosphate to orotate, leading to the formation of orotidine monophosphate (OMP). The chain is Orotate phosphoribosyltransferase from Synechocystis sp. (strain ATCC 27184 / PCC 6803 / Kazusa).